Consider the following 205-residue polypeptide: MIGRIRGLLVEKQAPEVLIDVSGVGYEIQMPLTSFYELPEIGLEAVVFTHFVVREDAQLLYGFISKQERALFRLLIKTNGVGPKLALTILSGMTAGEFVACVERDDIATLVKLPGVGKKTAERLLVEMRDKLKSLMEASVGSEREFMLQSNYTAPVVANTAEEDAIAALLSLGYKPAQASKAVSAVYVDGIDSESLIKSALKSML.

Residues 1–64 (MIGRIRGLLV…EDAQLLYGFI (64 aa)) form a domain I region. The interval 65 to 143 (SKQERALFRL…SLMEASVGSE (79 aa)) is domain II. The tract at residues 144–156 (REFMLQSNYTAPV) is flexible linker. Residues 157 to 205 (VANTAEEDAIAALLSLGYKPAQASKAVSAVYVDGIDSESLIKSALKSML) are domain III.

This sequence belongs to the RuvA family. Homotetramer. Forms an RuvA(8)-RuvB(12)-Holliday junction (HJ) complex. HJ DNA is sandwiched between 2 RuvA tetramers; dsDNA enters through RuvA and exits via RuvB. An RuvB hexamer assembles on each DNA strand where it exits the tetramer. Each RuvB hexamer is contacted by two RuvA subunits (via domain III) on 2 adjacent RuvB subunits; this complex drives branch migration. In the full resolvosome a probable DNA-RuvA(4)-RuvB(12)-RuvC(2) complex forms which resolves the HJ.

Its subcellular location is the cytoplasm. Functionally, the RuvA-RuvB-RuvC complex processes Holliday junction (HJ) DNA during genetic recombination and DNA repair, while the RuvA-RuvB complex plays an important role in the rescue of blocked DNA replication forks via replication fork reversal (RFR). RuvA specifically binds to HJ cruciform DNA, conferring on it an open structure. The RuvB hexamer acts as an ATP-dependent pump, pulling dsDNA into and through the RuvAB complex. HJ branch migration allows RuvC to scan DNA until it finds its consensus sequence, where it cleaves and resolves the cruciform DNA. The polypeptide is Holliday junction branch migration complex subunit RuvA (Shewanella piezotolerans (strain WP3 / JCM 13877)).